The primary structure comprises 239 residues: tRNA1(Val) (adenine(37)-N6)-methyltransferase (239 aa).

Belongs to the methyltransferase superfamily. tRNA (adenine-N(6)-)-methyltransferase family.

The protein resides in the cytoplasm. The enzyme catalyses adenosine(37) in tRNA1(Val) + S-adenosyl-L-methionine = N(6)-methyladenosine(37) in tRNA1(Val) + S-adenosyl-L-homocysteine + H(+). Functionally, specifically methylates the adenine in position 37 of tRNA(1)(Val) (anticodon cmo5UAC). In Trichodesmium erythraeum (strain IMS101), this protein is tRNA1(Val) (adenine(37)-N6)-methyltransferase.